Here is a 701-residue protein sequence, read N- to C-terminus: MQGNPLVVEVGQVAKQANGATVVRYGDSTVLTAAVMSKKMATGDFFPLQVNYEEKMYAAGKFPGGFMKREGRPSTDATLTARLIDRPIRPMFAEGFRNEVQVINTVLSYDENASAPMAAMFGSSLALSISDIPFNGPIAGVQVGYIDGEFIINPDKEQMEASLLELTVAGSKEAINMVESGAKELSEDIMLEALLKGHQAIQELIAFQEQIVAVVGKEKAEVELLQVDADLQADIVAKYNAQLQKAVQVEEKKAREAATEAVKEMVKAEYEERYAEDENLATIMRDVAEILEQMEHAEVRRLITEDKIRPDGRKIDEIRPLDAVVDFLPKVHGSGLFTRGQTQALSILTLAPMGETQIIDGLAPEYKKRFLHHYNFPQYSVGETGRYGAAGRREIGHGALGERALEQVLPSLEEFPYAIRLVAEVLESNGSSSQASICAGTLALMAGGVPIKAPVAGIAMGLISDGTNYTVLTDIQGLEDHFGDMDFKVAGTREGITALQMDIKIAGITPQILEEALAQAKKARFEILDVIEATIAEPRPELAPTAPKIDTIKIDVDKIKVVIGKGGETIDKIIAETGVKIDIDDEGNVSIYSSDQAAINRTKEIIAGLVREAKVGEVYHAKVVRIEKFGAFVNLFDKTDALVHISEIAWTRTTNVSDVLEVGEDVDVKVIKIDEKGRVDASMKALIPRPPKPEKKEEKHD.

Mg(2+) contacts are provided by D480 and D486. In terms of domain architecture, KH spans 547 to 606; the sequence is PKIDTIKIDVDKIKVVIGKGGETIDKIIAETGVKIDIDDEGNVSIYSSDQAAINRTKEII. In terms of domain architecture, S1 motif spans 616–684; the sequence is GEVYHAKVVR…EKGRVDASMK (69 aa). Residues 682–701 form a disordered region; it reads SMKALIPRPPKPEKKEEKHD. The segment covering 691-701 has biased composition (basic and acidic residues); the sequence is PKPEKKEEKHD.

The protein belongs to the polyribonucleotide nucleotidyltransferase family. Mg(2+) is required as a cofactor.

Its subcellular location is the cytoplasm. The catalysed reaction is RNA(n+1) + phosphate = RNA(n) + a ribonucleoside 5'-diphosphate. Involved in mRNA degradation. Catalyzes the phosphorolysis of single-stranded polyribonucleotides processively in the 3'- to 5'-direction. This chain is Polyribonucleotide nucleotidyltransferase, found in Streptococcus pyogenes serotype M12 (strain MGAS2096).